We begin with the raw amino-acid sequence, 324 residues long: NADH-ubiquinone oxidoreductase chain 1 (324 aa).

8 helical membrane-spanning segments follow: residues 9–29, 75–95, 106–126, 146–166, 178–198, 212–232, 259–279, and 299–319; these read LINP…LTLV, ILFL…WAPM, LGIL…LGSG, ISYE…SGGY, TWLL…TLAE, ELVS…FFLA, ELMT…FLWM, and FLPI…ALAG.

It belongs to the complex I subunit 1 family. In terms of assembly, core subunit of respiratory chain NADH dehydrogenase (Complex I) which is composed of 45 different subunits.

Its subcellular location is the mitochondrion inner membrane. The catalysed reaction is a ubiquinone + NADH + 5 H(+)(in) = a ubiquinol + NAD(+) + 4 H(+)(out). In terms of biological role, core subunit of the mitochondrial membrane respiratory chain NADH dehydrogenase (Complex I) which catalyzes electron transfer from NADH through the respiratory chain, using ubiquinone as an electron acceptor. Essential for the catalytic activity and assembly of complex I. The protein is NADH-ubiquinone oxidoreductase chain 1 (mt-nd1) of Danio rerio (Zebrafish).